Here is a 642-residue protein sequence, read N- to C-terminus: Putative ankyrin repeat protein L91 (642 aa).

ANK repeat units lie at residues 42-76 (HFTK…VKNP), 85-118 (EGWT…NPNI), 153-186 (NGFT…NVDS), 190-224 (NGET…TLHK), 227-256 (NGFT…DVNA), 260-288 (EGKS…EINH), 292-322 (NDIN…NPNE), 326-360 (NKNA…NPNI), 365-397 (SRTI…NVNA), 401-434 (EGRT…NVNH), 438-470 (DGAH…DVNI), 475-514 (KKWT…NVNA), 518-550 (YGNN…NVNH), and 554-587 (NGDT…NPNI).

In Acanthamoeba polyphaga (Amoeba), this protein is Putative ankyrin repeat protein L91.